Consider the following 341-residue polypeptide: Ferrochelatase (341 aa).

Residues histidine 189 and glutamate 293 each contribute to the Fe cation site.

Belongs to the ferrochelatase family.

It is found in the cytoplasm. The catalysed reaction is heme b + 2 H(+) = protoporphyrin IX + Fe(2+). It participates in porphyrin-containing compound metabolism; protoheme biosynthesis; protoheme from protoporphyrin-IX: step 1/1. Catalyzes the ferrous insertion into protoporphyrin IX. The polypeptide is Ferrochelatase (Stutzerimonas stutzeri (strain A1501) (Pseudomonas stutzeri)).